Consider the following 489-residue polypeptide: NADH-quinone oxidoreductase subunit N (489 aa).

The next 14 helical transmembrane spans lie at Leu-8–Ile-28, Phe-35–Val-55, Phe-75–Leu-95, Phe-105–Leu-125, Ser-127–Phe-147, Tyr-159–Ala-179, Val-203–Phe-223, Pro-235–Met-255, Met-271–Gln-291, Val-303–Ala-323, Ile-329–Ser-349, Ala-374–Ile-394, Ser-407–Leu-427, and Leu-456–Ile-476.

The protein belongs to the complex I subunit 2 family. In terms of assembly, NDH-1 is composed of 13 different subunits. Subunits NuoA, H, J, K, L, M, N constitute the membrane sector of the complex.

It is found in the cell inner membrane. The catalysed reaction is a quinone + NADH + 5 H(+)(in) = a quinol + NAD(+) + 4 H(+)(out). NDH-1 shuttles electrons from NADH, via FMN and iron-sulfur (Fe-S) centers, to quinones in the respiratory chain. The immediate electron acceptor for the enzyme in this species is believed to be ubiquinone. Couples the redox reaction to proton translocation (for every two electrons transferred, four hydrogen ions are translocated across the cytoplasmic membrane), and thus conserves the redox energy in a proton gradient. This chain is NADH-quinone oxidoreductase subunit N, found in Proteus mirabilis (strain HI4320).